Here is a 356-residue protein sequence, read N- to C-terminus: Peptide chain release factor 1 (356 aa).

Glutamine 233 bears the N5-methylglutamine mark.

This sequence belongs to the prokaryotic/mitochondrial release factor family. Post-translationally, methylated by PrmC. Methylation increases the termination efficiency of RF1.

The protein resides in the cytoplasm. In terms of biological role, peptide chain release factor 1 directs the termination of translation in response to the peptide chain termination codons UAG and UAA. This Endomicrobium trichonymphae protein is Peptide chain release factor 1.